The chain runs to 67 residues: DNA gyrase inhibitor YacG (67 aa).

The Zn(2+) site is built by Cys-9, Cys-12, Cys-28, and Cys-32. Positions 46–67 (RIPSSGDLNDSDDWSEQPLDRQ) are disordered.

This sequence belongs to the DNA gyrase inhibitor YacG family. Interacts with GyrB. It depends on Zn(2+) as a cofactor.

Inhibits all the catalytic activities of DNA gyrase by preventing its interaction with DNA. Acts by binding directly to the C-terminal domain of GyrB, which probably disrupts DNA binding by the gyrase. In Erwinia tasmaniensis (strain DSM 17950 / CFBP 7177 / CIP 109463 / NCPPB 4357 / Et1/99), this protein is DNA gyrase inhibitor YacG.